The primary structure comprises 112 residues: Ribosome-binding factor A (112 aa).

Belongs to the RbfA family. In terms of assembly, monomer. Binds 30S ribosomal subunits, but not 50S ribosomal subunits or 70S ribosomes.

Its subcellular location is the cytoplasm. Functionally, one of several proteins that assist in the late maturation steps of the functional core of the 30S ribosomal subunit. Associates with free 30S ribosomal subunits (but not with 30S subunits that are part of 70S ribosomes or polysomes). Required for efficient processing of 16S rRNA. May interact with the 5'-terminal helix region of 16S rRNA. The chain is Ribosome-binding factor A from Ruthia magnifica subsp. Calyptogena magnifica.